Reading from the N-terminus, the 180-residue chain is Secreted RxLR effector protein 5 (180 aa).

A signal peptide spans Met-1–Ala-24. The RxLR-dEER motif lies at Arg-44–Arg-60.

It belongs to the RxLR effector family.

Its subcellular location is the secreted. The protein localises to the host cell. In terms of biological role, secreted effector that partially suppresses elicitor-induced cell death in host and enhances virulence of P.parasitica. This is Secreted RxLR effector protein 5 from Phytophthora nicotianae (Potato buckeye rot agent).